Reading from the N-terminus, the 570-residue chain is Phosphoribosylaminoimidazole carboxylase (570 aa).

The 188-residue stretch at 110–297 (KQHLVKNRIP…QFEAHLRAIL (188 aa)) folds into the ATP-grasp domain. Residue 137-192 (GSSLGYPFVLKSRTLAYDGRGNFVVKSEEDIEKGLEFLANRPLYAEKWASFKKELS) participates in ATP binding.

In the C-terminal section; belongs to the AIR carboxylase family. Class I subfamily.

It catalyses the reaction 5-amino-1-(5-phospho-D-ribosyl)imidazole-4-carboxylate + H(+) = 5-amino-1-(5-phospho-beta-D-ribosyl)imidazole + CO2. Its pathway is purine metabolism; IMP biosynthesis via de novo pathway; 5-amino-1-(5-phospho-D-ribosyl)imidazole-4-carboxylate from 5-amino-1-(5-phospho-D-ribosyl)imidazole (carboxylase route): step 1/1. The chain is Phosphoribosylaminoimidazole carboxylase (ADE2) from Candida glabrata (strain ATCC 2001 / BCRC 20586 / JCM 3761 / NBRC 0622 / NRRL Y-65 / CBS 138) (Yeast).